A 156-amino-acid chain; its full sequence is ATP synthase subunit b', chloroplastic (156 aa).

A helical transmembrane segment spans residues Ala24–Leu44.

The protein belongs to the ATPase B chain family. In terms of assembly, F-type ATPases have 2 components, F(1) - the catalytic core - and F(0) - the membrane proton channel. F(1) has five subunits: alpha(3), beta(3), gamma(1), delta(1), epsilon(1). F(0) has four main subunits: a(1), b(1), b'(1) and c(10-14). The alpha and beta chains form an alternating ring which encloses part of the gamma chain. F(1) is attached to F(0) by a central stalk formed by the gamma and epsilon chains, while a peripheral stalk is formed by the delta, b and b' chains.

It is found in the plastid. The protein localises to the chloroplast thylakoid membrane. F(1)F(0) ATP synthase produces ATP from ADP in the presence of a proton or sodium gradient. F-type ATPases consist of two structural domains, F(1) containing the extramembraneous catalytic core and F(0) containing the membrane proton channel, linked together by a central stalk and a peripheral stalk. During catalysis, ATP synthesis in the catalytic domain of F(1) is coupled via a rotary mechanism of the central stalk subunits to proton translocation. In terms of biological role, component of the F(0) channel, it forms part of the peripheral stalk, linking F(1) to F(0). The b'-subunit is a diverged and duplicated form of b found in plants and photosynthetic bacteria. This chain is ATP synthase subunit b', chloroplastic, found in Phaeodactylum tricornutum (strain CCAP 1055/1).